Consider the following 572-residue polypeptide: Thiamine biosynthesis protein THI22 (572 aa).

Positions 1-19 (MVIILLGLCTLGFPRTAFC) are cleaved as a signal peptide.

It belongs to the thiaminase-2 family.

It localises to the secreted. Its function is as follows. Is not required for thiamine biosynthesis. The chain is Thiamine biosynthesis protein THI22 (THI22) from Saccharomyces cerevisiae (strain ATCC 204508 / S288c) (Baker's yeast).